The chain runs to 346 residues: Histidinol-phosphate aminotransferase (346 aa).

Lys209 carries the N6-(pyridoxal phosphate)lysine modification.

The protein belongs to the class-II pyridoxal-phosphate-dependent aminotransferase family. Histidinol-phosphate aminotransferase subfamily. In terms of assembly, homodimer. The cofactor is pyridoxal 5'-phosphate.

The catalysed reaction is L-histidinol phosphate + 2-oxoglutarate = 3-(imidazol-4-yl)-2-oxopropyl phosphate + L-glutamate. It participates in amino-acid biosynthesis; L-histidine biosynthesis; L-histidine from 5-phospho-alpha-D-ribose 1-diphosphate: step 7/9. This Flavobacterium psychrophilum (strain ATCC 49511 / DSM 21280 / CIP 103535 / JIP02/86) protein is Histidinol-phosphate aminotransferase.